We begin with the raw amino-acid sequence, 1187 residues long: Myelin transcription factor 1-like protein (1187 aa).

The disordered stretch occupies residues 1-20 (MDVDAEEKRHRTRSKGVRVP). The CCHHC-type 1 zinc-finger motif lies at 22-65 (EPAIQELFSCPTPGCDGSGHVSGKYARHRSVYGCPLAKKRKTQD). Zn(2+) is bound by residues cysteine 31, cysteine 36, histidine 49, and cysteine 55. Disordered regions lie at residues 56-178 (PLAK…QMSC) and 221-248 (RTESEMNSNTSNSLEDDSDKNENLGRKS). Over residues 89–172 (ECYESDGTED…EEEEEEEENE (84 aa)) the composition is skewed to acidic residues. Serine 251 is subject to Phosphoserine. Disordered regions lie at residues 343-422 (SETN…DRSE) and 450-509 (REKM…PTPG). Positions 344–358 (ETNPQDRSQPPNMSV) are enriched in polar residues. Basic and acidic residues-rich tracts occupy residues 362 to 377 (VRQEDDFPGRTPDRSY), 401 to 412 (AKEDGCHERDDD), and 450 to 504 (REKM…RESK). CCHHC-type zinc fingers lie at residues 496 to 539 (SRTE…PPEI) and 540 to 583 (LAMH…KLAK). Residues cysteine 505, cysteine 510, histidine 523, cysteine 529, cysteine 549, cysteine 554, histidine 567, and cysteine 573 each contribute to the Zn(2+) site. The disordered stretch occupies residues 684–708 (ASPSSSTTSSYAPSSSSNLSCGGGS). 3 consecutive CCHHC-type zinc fingers follow at residues 895-938 (LATS…GIRI), 944-987 (DKED…QKDG), and 997-1040 (KSVK…MKKA). Positions 904, 909, 922, 928, 953, 958, 971, 977, 1006, 1011, 1024, and 1030 each coordinate Zn(2+). Residues 1055-1131 (SNGIENDEEI…LANLSQSLIH (77 aa)) adopt a coiled-coil conformation.

This sequence belongs to the MYT1 family. Interacts with SIN3B. In terms of tissue distribution, brain, testis and pituitary gland. Expression is higher in the brain than in the testis and pituitary gland. Highest level expression seen in the developing CNS.

The protein resides in the nucleus. The protein localises to the chromosome. In terms of biological role, transcription factor that plays a key role in neuronal differentiation. Acts by specifically repressing expression of non-neuronal genes during neuron differentiation. In contrast to other transcription repressors that inhibit specific lineages, mediates repression of multiple differentiation programs. Also represses expression of negative regulators of neurogenesis, such as members of the Notch signaling pathway, including HES1. The combination of three transcription factors, ASCL1, POU3F2/BRN2 and MYT1L, is sufficient to reprogram fibroblasts and other somatic cells into induced neuronal (iN) cells in vitro. Directly binds the 5'-AAGTT-3' core motif present on the promoter of target genes and represses transcription by recruiting a multiprotein complex containing SIN3B. The 5'-AAGTT-3' core motif is absent from the promoter of neural genes. In Rattus norvegicus (Rat), this protein is Myelin transcription factor 1-like protein (Myt1l).